The following is a 274-amino-acid chain: MAIVKCKPTSPGRRHVVKIVNADLHKGKPYAPLLEKNSKNGGRNNNGRITVRHVGGGHKQHYRLIDFKRTKDGIPAVVERLEYDPNRSANIALVLFADGERRYIIAPKGIQAGDTVQSGVDAPIKAGNCLPLRNIPVGSTVHCVELKPGKGAQIARSAGAYAQIIARDGAYVTLRLRSGEMRKVLSEGRATIGEVGNSEHMLRELGKAGATRWRGVRPTVRGVAMNPVDHPHGGGEGRTSGGRHPVSPWGMPTKGFKTRKNKSTDKYIVRRRNK.

Positions 223–274 (VAMNPVDHPHGGGEGRTSGGRHPVSPWGMPTKGFKTRKNKSTDKYIVRRRNK) are disordered.

This sequence belongs to the universal ribosomal protein uL2 family. Part of the 50S ribosomal subunit. Forms a bridge to the 30S subunit in the 70S ribosome.

Its function is as follows. One of the primary rRNA binding proteins. Required for association of the 30S and 50S subunits to form the 70S ribosome, for tRNA binding and peptide bond formation. It has been suggested to have peptidyltransferase activity; this is somewhat controversial. Makes several contacts with the 16S rRNA in the 70S ribosome. The sequence is that of Large ribosomal subunit protein uL2 from Aliivibrio fischeri (strain ATCC 700601 / ES114) (Vibrio fischeri).